We begin with the raw amino-acid sequence, 273 residues long: Dermonecrotic toxin LapSicTox-alphaIB1ai (273 aa).

His-5 is a catalytic residue. Glu-25 and Asp-27 together coordinate Mg(2+). His-41 acts as the Nucleophile in catalysis. Intrachain disulfides connect Cys-45–Cys-51 and Cys-47–Cys-190. Asp-85 serves as a coordination point for Mg(2+). Asn-250 carries N-linked (GlcNAc...) asparagine glycosylation.

The protein belongs to the arthropod phospholipase D family. Class II subfamily. Requires Mg(2+) as cofactor. In terms of tissue distribution, expressed by the venom gland.

The protein localises to the secreted. The catalysed reaction is an N-(acyl)-sphingosylphosphocholine = an N-(acyl)-sphingosyl-1,3-cyclic phosphate + choline. The enzyme catalyses an N-(acyl)-sphingosylphosphoethanolamine = an N-(acyl)-sphingosyl-1,3-cyclic phosphate + ethanolamine. It catalyses the reaction a 1-acyl-sn-glycero-3-phosphocholine = a 1-acyl-sn-glycero-2,3-cyclic phosphate + choline. It carries out the reaction a 1-acyl-sn-glycero-3-phosphoethanolamine = a 1-acyl-sn-glycero-2,3-cyclic phosphate + ethanolamine. In terms of biological role, dermonecrotic toxins cleave the phosphodiester linkage between the phosphate and headgroup of certain phospholipids (sphingolipid and lysolipid substrates), forming an alcohol (often choline) and a cyclic phosphate. This toxin acts on sphingomyelin (SM). It may also act on ceramide phosphoethanolamine (CPE), lysophosphatidylcholine (LPC) and lysophosphatidylethanolamine (LPE), but not on lysophosphatidylserine (LPS), and lysophosphatidylglycerol (LPG). It acts by transphosphatidylation, releasing exclusively cyclic phosphate products as second products. Induces dermonecrosis, hemolysis, increased vascular permeability, edema, inflammatory response, and platelet aggregation. This chain is Dermonecrotic toxin LapSicTox-alphaIB1ai, found in Loxosceles apachea (Apache recluse spider).